A 1030-amino-acid polypeptide reads, in one-letter code: Arrestin domain-containing protein F (1030 aa).

Disordered stretches follow at residues 1-27 (MEIIKENNENDGENINNIPKKKSGSKR) and 119-154 (ENKNISDNSNFDDGEEDDTDNKKNINNKNNNNNNPL). Acidic residues predominate over residues 128 to 137 (NFDDGEEDDT). Over residues 142–152 (NINNKNNNNNN) the composition is skewed to low complexity. Coiled-coil stretches lie at residues 320 to 374 (HQLE…HNNN) and 544 to 577 (QKLNKKDKEKEKEKEKENDNDNENNNSESLIRDQ). 2 disordered regions span residues 539-572 (SPQSPQKLNKKDKEKEKEKEKENDNDNENNNSES) and 885-931 (NNEK…NNNN). Residues 547 to 562 (NKKDKEKEKEKEKEND) are compositionally biased toward basic and acidic residues. The segment covering 910 to 931 (SPSSSSFLSNSSNTSSSKNNNN) has biased composition (low complexity).

It belongs to the arrestin family.

The sequence is that of Arrestin domain-containing protein F (adcF) from Dictyostelium discoideum (Social amoeba).